Here is a 134-residue protein sequence, read N- to C-terminus: MSNTENKQKRVSVGKDIATRRRVARARRHFRIRKTLRGTPEAPRLVVHRSSRHMHVQIIDDLAGHTLAAASSIEPEVRAVEGDKKAKGAKVGQLIAERAKAAGIEQVVFDRAGYKYHGRVAALADAAREGGLKF.

Belongs to the universal ribosomal protein uL18 family. Part of the 50S ribosomal subunit; part of the 5S rRNA/L5/L18/L25 subcomplex. Contacts the 5S and 23S rRNAs.

Functionally, this is one of the proteins that bind and probably mediate the attachment of the 5S RNA into the large ribosomal subunit, where it forms part of the central protuberance. The sequence is that of Large ribosomal subunit protein uL18 from Corynebacterium efficiens (strain DSM 44549 / YS-314 / AJ 12310 / JCM 11189 / NBRC 100395).